The sequence spans 540 residues: Calnexin homolog (540 aa).

A signal peptide spans 1 to 29 (MELSRRKMCCYIQFCCFVLIGCFISQICA). At 30–469 (SSDAIFYESF…EKAETQPNIT (440 aa)) the chain is on the lumenal side. Positions 38 and 69 each coordinate Ca(2+). The cysteines at positions 112 and 147 are disulfide-linked. Residues tyrosine 116, lysine 118, tyrosine 138, and aspartate 145 each coordinate an alpha-D-glucoside. The tract at residues 221–301 (LIPTKTIPDP…DWDDEEDGEW (81 aa)) is disordered. Positions 227-360 (IPDPDDKKPE…REIPNPDYFE (134 aa)) are p domain (Extended arm). The segment covering 228–253 (PDPDDKKPEDWDERAKIPDPEATKPD) has biased composition (basic and acidic residues). Repeat copies occupy residues 229 to 240 (DPDDKKPEDWDE), 246 to 257 (DPEATKPDDWDE), 265 to 276 (DEEAEKPEGWLD), 284 to 295 (DPEAVKPEDWDD), and 299 to 309 (GEWEAPQIENP). 2 4 X approximate repeats regions span residues 229–295 (DPDD…DWDD) and 299–356 (GEWE…IPNP). 2 stretches are compositionally biased toward acidic residues: residues 254 to 285 (DWDE…IDDP) and 292 to 301 (DWDDEEDGEW). A disulfide bond links cysteine 311 and cysteine 317. Tandem repeats lie at residues 318-328 (GEWRRPLKRNP), 332-342 (GKWHAPLIDNP), and 346-356 (GIWKPREIPNP). Glutamate 375 is a binding site for an alpha-D-glucoside. Aspartate 386 lines the Ca(2+) pocket. Asparagine 467 carries N-linked (GlcNAc...) asparagine glycosylation. The helical transmembrane segment at 470–490 (IGVIVSIIVVIFSILLKLLFG) threads the bilayer. Over 491-540 (GKKAAPKVNVVPKKKEEPEASNTAEVREGEEEKTEGEVAAAPRRRPRRDT) the chain is Cytoplasmic. Residues 499-540 (NVVPKKKEEPEASNTAEVREGEEEKTEGEVAAAPRRRPRRDT) are disordered.

The protein belongs to the calreticulin family.

It is found in the endoplasmic reticulum membrane. Calcium-binding protein that interacts with newly synthesized monoglucosylated glycoproteins in the endoplasmic reticulum. It may act in assisting protein assembly and/or in the retention within the ER of unassembled protein subunits. It seems to play a major role in the quality control apparatus of the ER by the retention of incorrectly folded proteins. In Helianthus tuberosus (Jerusalem artichoke), this protein is Calnexin homolog.